The following is a 569-amino-acid chain: Arginine--tRNA ligase (569 aa).

The 'HIGH' region motif lies at 123-133 (PNIAKRMHIGH).

This sequence belongs to the class-I aminoacyl-tRNA synthetase family. In terms of assembly, monomer.

The protein resides in the cytoplasm. It catalyses the reaction tRNA(Arg) + L-arginine + ATP = L-arginyl-tRNA(Arg) + AMP + diphosphate. This chain is Arginine--tRNA ligase, found in Fusobacterium nucleatum subsp. nucleatum (strain ATCC 25586 / DSM 15643 / BCRC 10681 / CIP 101130 / JCM 8532 / KCTC 2640 / LMG 13131 / VPI 4355).